Reading from the N-terminus, the 132-residue chain is Transthyretin-like protein 16 (132 aa).

Positions 1–19 (MRSLVVCLLLAACALECTA) are cleaved as a signal peptide. N23 carries N-linked (GlcNAc...) asparagine glycosylation.

It belongs to the nematode transthyretin-like family.

Its subcellular location is the secreted. In Caenorhabditis elegans, this protein is Transthyretin-like protein 16 (ttr-16).